A 404-amino-acid chain; its full sequence is Phosphoglycerate kinase (404 aa).

Substrate contacts are provided by residues 22–24 (DFN), Arg-37, 60–63 (HLGR), Arg-120, and Arg-160. Residues Lys-215, Glu-333, and 360–363 (GGDS) each bind ATP.

This sequence belongs to the phosphoglycerate kinase family. In terms of assembly, monomer.

Its subcellular location is the cytoplasm. The catalysed reaction is (2R)-3-phosphoglycerate + ATP = (2R)-3-phospho-glyceroyl phosphate + ADP. It functions in the pathway carbohydrate degradation; glycolysis; pyruvate from D-glyceraldehyde 3-phosphate: step 2/5. The chain is Phosphoglycerate kinase from Latilactobacillus sakei subsp. sakei (strain 23K) (Lactobacillus sakei subsp. sakei).